Reading from the N-terminus, the 217-residue chain is Ras-related protein RABA1f (217 aa).

Residue 20 to 27 coordinates GTP; that stretch reads GDSGVGKS. Residues 42–50 carry the Effector region motif; that stretch reads SKSTIGVEF. Residues 68–72, 126–129, and 156–157 each bind GTP; these read DTAGQ, NKAD, and SA. 2 S-geranylgeranyl cysteine lipidation sites follow: cysteine 214 and cysteine 215.

This sequence belongs to the small GTPase superfamily. Rab family.

The protein resides in the cell membrane. Functionally, intracellular vesicle trafficking and protein transport. The sequence is that of Ras-related protein RABA1f (RABA1F) from Arabidopsis thaliana (Mouse-ear cress).